Here is a 527-residue protein sequence, read N- to C-terminus: AAA ATPase forming ring-shaped complexes (527 aa).

Positions Met1–Asp18 are enriched in low complexity. The interval Met1–Asn38 is disordered. A compositionally biased stretch (basic and acidic residues) spans Phe19–Gln33. Residues Arg21 to Lys53 are a coiled coil. An ATP-binding site is contributed by Gly257–Leu262. The interval Asp492–Arg515 is disordered. Polar residues predominate over residues Ser497–Asp507.

Belongs to the AAA ATPase family. As to quaternary structure, homohexamer. Assembles into a hexameric ring structure.

This Corynebacterium glutamicum (strain R) protein is AAA ATPase forming ring-shaped complexes.